Here is a 478-residue protein sequence, read N- to C-terminus: Nuclear distribution protein PAC1 (478 aa).

Positions 9-41 (QAEELHKAMIAYLLSANLPKSAAALREELADSV) constitute a LisH domain. A coiled-coil region spans residues 60 to 87 (TSVVRLQKKIMDLESRNNALQSELDSAT). 8 WD repeats span residues 113 to 154 (SHRE…RTIK), 156 to 196 (HTKA…KNIR), 200 to 247 (GHDH…CVKT), 250 to 289 (GHVD…TKST), 292 to 352 (GHEH…IKTL), 354 to 393 (GHDN…KCVR), 398 to 439 (AHGH…AASA), and 440 to 477 (INGV…RVFA).

The protein belongs to the WD repeat LIS1/nudF family. In terms of assembly, self-associates. Interacts with NDL1 and dynein.

It localises to the cytoplasm. Its subcellular location is the cytoskeleton. It is found in the spindle pole. Positively regulates the activity of the minus-end directed microtubule motor protein dynein. May enhance dynein-mediated microtubule sliding by targeting dynein to the microtubule plus end. Required for nuclear migration during vegetative growth as well as development. Required for retrograde early endosome (EE) transport from the hyphal tip. Required for localization of dynein to the mitotic spindle poles. Recruits additional proteins to the dynein complex at SPBs. This Paracoccidioides brasiliensis (strain Pb18) protein is Nuclear distribution protein PAC1.